The chain runs to 517 residues: MTNIHPESPEDFEFIETPAASCTTPADDCGVRTTSYPAIKNAPVPADAAGSDSFSNTLLILLLVVIPWYTARQIGGGLKTTIFFAIFTTIPILMAFWSIASSISPRKNEKAKYAGRPVEHYLHFHSEHDRATYRGKSKIPMEVFYEKYFAGEVDFKMDALEALEFRHDWANFRFTMGLFKHFLFGFIPELLVHSRSQDEEQVRDHYDRGDDFYAWFLGPRMIYTSGIISDIKKEETLEQLQDNKLAVVCEKVGLKPGDTVLDLGCGWGTLAKYASVHYGAQVTGITLGRNQTAWGNKGLRAAGIDESQSRILCMDYRDAPRVPGGYKKITCLEMAEHVGVRHFGSFLAQVNEMLDDDGVFFLQIAGLRKSWQYEDLIWGLFMNKYIFPGADASTPLGFVVDKLEAAGFEIKGIDTIGVHYSATLWRWYRNWLGNGEKVKAKYGERWYRIWEYFLAYSTITSRQGGATCWQITLVKNINSTHRVEGINSQYGLTGAREAAIASVGKGSLPSAHVTFKA.

2 helical membrane-spanning segments follow: residues 58-78 (LLIL…GGGL) and 80-100 (TTIF…WSIA). S-adenosyl-L-methionine-binding positions include 223–224 (YT), 286–291 (TLGRNQ), and 316–317 (YR). The N-linked (GlcNAc...) asparagine glycan is linked to Asn290. N-linked (GlcNAc...) asparagine glycosylation occurs at Asn478.

Belongs to the CFA/CMAS family.

The protein localises to the membrane. The enzyme catalyses a (4E,8E)-4-sphinga-4,8-dienine ceramide + S-adenosyl-L-methionine = a 9-methyl-(4E,8E)-sphinga-4,8-dienine ceramide + S-adenosyl-L-homocysteine + H(+). The protein operates within lipid metabolism; sphingolipid metabolism. Its function is as follows. Catalyzes methylation of the sphingoid base component of glucosylceramides (GluCers) at the C9-position. Sphingolipid C9-methylation requires 4,8-desaturated ceramides as substrates. Glucosylceramides play important roles in growth, differentiation and pathogenicity. The methyl group at the C9-position distinguishes fungal glucosylceramides from those of plants and animals and may thus play a role in host-pathogen interactions enabling the host to recognize the fungal attack and initiate specific defense responses. The protein is Sphingolipid C9-methyltransferase A of Emericella nidulans (strain FGSC A4 / ATCC 38163 / CBS 112.46 / NRRL 194 / M139) (Aspergillus nidulans).